The chain runs to 187 residues: Peptidyl-tRNA hydrolase (187 aa).

Residue tyrosine 14 participates in tRNA binding. Histidine 19 functions as the Proton acceptor in the catalytic mechanism. Tyrosine 64, asparagine 66, and asparagine 112 together coordinate tRNA.

This sequence belongs to the PTH family. In terms of assembly, monomer.

The protein resides in the cytoplasm. The catalysed reaction is an N-acyl-L-alpha-aminoacyl-tRNA + H2O = an N-acyl-L-amino acid + a tRNA + H(+). Hydrolyzes ribosome-free peptidyl-tRNAs (with 1 or more amino acids incorporated), which drop off the ribosome during protein synthesis, or as a result of ribosome stalling. Its function is as follows. Catalyzes the release of premature peptidyl moieties from peptidyl-tRNA molecules trapped in stalled 50S ribosomal subunits, and thus maintains levels of free tRNAs and 50S ribosomes. The protein is Peptidyl-tRNA hydrolase of Bdellovibrio bacteriovorus (strain ATCC 15356 / DSM 50701 / NCIMB 9529 / HD100).